The chain runs to 380 residues: Cytochrome b (380 aa).

Transmembrane regions (helical) follow at residues 34–54 (FGSLLGLCLVTQILTGLLLAT), 78–99 (WLIRNLHANGASFFFICIYLHI), 114–134 (WNTGILLLLTLMATAFVGYVL), and 179–199 (FFALHFLLPFMIAGLTLIHLT). H84 and H98 together coordinate heme b. Residues H183 and H197 each contribute to the heme b site. H202 provides a ligand contact to a ubiquinone. A run of 4 helical transmembrane segments spans residues 227-247 (LKDTLGFMFMLFLLTTLALFS), 289-309 (LGGVLALAASVLILFLSPLLH), 321-341 (FSQFLFWLLIANLLILTWVGS), and 348-368 (FIIIGQLASLTYFTILLILLP).

It belongs to the cytochrome b family. As to quaternary structure, the cytochrome bc1 complex contains 11 subunits: 3 respiratory subunits (MT-CYB, CYC1 and UQCRFS1), 2 core proteins (UQCRC1 and UQCRC2) and 6 low-molecular weight proteins (UQCRH/QCR6, UQCRB/QCR7, UQCRQ/QCR8, UQCR10/QCR9, UQCR11/QCR10 and a cleavage product of UQCRFS1). This cytochrome bc1 complex then forms a dimer. Heme b serves as cofactor.

The protein resides in the mitochondrion inner membrane. Component of the ubiquinol-cytochrome c reductase complex (complex III or cytochrome b-c1 complex) that is part of the mitochondrial respiratory chain. The b-c1 complex mediates electron transfer from ubiquinol to cytochrome c. Contributes to the generation of a proton gradient across the mitochondrial membrane that is then used for ATP synthesis. This Garrodia nereis (Grey-backed storm-petrel) protein is Cytochrome b (MT-CYB).